The chain runs to 158 residues: 2-C-methyl-D-erythritol 2,4-cyclodiphosphate synthase (158 aa).

Positions 8 and 10 each coordinate a divalent metal cation. 4-CDP-2-C-methyl-D-erythritol 2-phosphate contacts are provided by residues 8–10 (DVH) and 34–35 (HS). Histidine 42 provides a ligand contact to a divalent metal cation. 4-CDP-2-C-methyl-D-erythritol 2-phosphate contacts are provided by residues 56–58 (DIG), 61–65 (FPDTD), 100–106 (AQAPKMA), 132–135 (TTSE), phenylalanine 139, and arginine 142.

This sequence belongs to the IspF family. As to quaternary structure, homotrimer. A divalent metal cation serves as cofactor.

The enzyme catalyses 4-CDP-2-C-methyl-D-erythritol 2-phosphate = 2-C-methyl-D-erythritol 2,4-cyclic diphosphate + CMP. It functions in the pathway isoprenoid biosynthesis; isopentenyl diphosphate biosynthesis via DXP pathway; isopentenyl diphosphate from 1-deoxy-D-xylulose 5-phosphate: step 4/6. In terms of biological role, involved in the biosynthesis of isopentenyl diphosphate (IPP) and dimethylallyl diphosphate (DMAPP), two major building blocks of isoprenoid compounds. Catalyzes the conversion of 4-diphosphocytidyl-2-C-methyl-D-erythritol 2-phosphate (CDP-ME2P) to 2-C-methyl-D-erythritol 2,4-cyclodiphosphate (ME-CPP) with a corresponding release of cytidine 5-monophosphate (CMP). This is 2-C-methyl-D-erythritol 2,4-cyclodiphosphate synthase from Aliivibrio fischeri (strain ATCC 700601 / ES114) (Vibrio fischeri).